A 195-amino-acid polypeptide reads, in one-letter code: Glycerol-3-phosphate acyltransferase (195 aa).

A run of 4 helical transmembrane segments spans residues 2-22 (INLL…SFIV), 79-99 (AALM…LLGF), 111-131 (VALI…VVIL), and 146-166 (TILP…GLVL).

Belongs to the PlsY family. Probably interacts with PlsX.

Its subcellular location is the cell membrane. It carries out the reaction an acyl phosphate + sn-glycerol 3-phosphate = a 1-acyl-sn-glycero-3-phosphate + phosphate. It functions in the pathway lipid metabolism; phospholipid metabolism. In terms of biological role, catalyzes the transfer of an acyl group from acyl-phosphate (acyl-PO(4)) to glycerol-3-phosphate (G3P) to form lysophosphatidic acid (LPA). This enzyme utilizes acyl-phosphate as fatty acyl donor, but not acyl-CoA or acyl-ACP. This chain is Glycerol-3-phosphate acyltransferase, found in Alkaliphilus metalliredigens (strain QYMF).